We begin with the raw amino-acid sequence, 216 residues long: Probable GTP-binding protein EngB (216 aa).

The region spanning glutamate 26–proline 200 is the EngB-type G domain. GTP-binding positions include glycine 34–serine 41, glycine 61–leucine 65, aspartate 79–glycine 82, threonine 146–aspartate 149, and tyrosine 179–serine 181. Serine 41 and threonine 63 together coordinate Mg(2+).

Belongs to the TRAFAC class TrmE-Era-EngA-EngB-Septin-like GTPase superfamily. EngB GTPase family. The cofactor is Mg(2+).

In terms of biological role, necessary for normal cell division and for the maintenance of normal septation. The protein is Probable GTP-binding protein EngB of Vibrio vulnificus (strain CMCP6).